Consider the following 129-residue polypeptide: Small ribosomal subunit protein uS11 (129 aa).

It belongs to the universal ribosomal protein uS11 family. As to quaternary structure, part of the 30S ribosomal subunit. Interacts with proteins S7 and S18. Binds to IF-3.

Functionally, located on the platform of the 30S subunit, it bridges several disparate RNA helices of the 16S rRNA. Forms part of the Shine-Dalgarno cleft in the 70S ribosome. This chain is Small ribosomal subunit protein uS11, found in Photobacterium profundum (strain SS9).